The chain runs to 524 residues: MSDNGELEDKPPAPPVRMSSTIFSTGGKDPLSANHSLKPLPSVPEEKKPRNKIISIFSSTEKGSKKKEKERPEISPPSDFEHTIHVGFDAVTGEFTGMPEQWARLLQTSNITKLEQKKNPQAVLDVLKFYDSNTVKQKYLSFTPPEKDGFPSGTPALNTKGSETSAVVTEEDDDDEDAAPPVIAPRPDHTKSIYTRSVIDPIPAPVGDSNVDSGAKSSDKQKKKAKMTDEEIMEKLRTIVSIGDPKKKYTRYEKIGQGASGTVFTATDVALGQEVAIKQINLQKQPKKELIINEILVMKELKNPNIVNFLDSYLVGDELFVVMEYLAGGSLTDVVTETCMDEAQIAAVCRECLQALEFLHANQVIHRDIKSDNVLLGMEGSVKLTDFGFCAQITPEQSKRSTMVGTPYWMAPEVVTRKAYGPKVDIWSLGIMAIEMVEGEPPYLNENPLRALYLIATNGTPELQNPEKLSPIFRDFLNRCLEMDVEKRGSAKELLQHPFLKLAKPLSSLTPLILAAKEAMKSNR.

The segment at 1 to 81 (MSDNGELEDK…PEISPPSDFE (81 aa)) is disordered. Ser-2 carries the post-translational modification N-acetylserine. A phosphoserine mark is found at Ser-2, Ser-20, Ser-55, Ser-58, and Ser-59. At Thr-60 the chain carries Phosphothreonine. Lys-62 is subject to N6-acetyllysine. Ser-64 carries the post-translational modification Phosphoserine. Residues 67 to 81 (KEKERPEISPPSDFE) are compositionally biased toward basic and acidic residues. The interval 69–112 (KERPEISPPSDFEHTIHVGFDAVTGEFTGMPEQWARLLQTSNIT) is GTPase-binding. The interval 69–137 (KERPEISPPS…KFYDSNTVKQ (69 aa)) is autoregulatory region. The region spanning 74-87 (ISPPSDFEHTIHVG) is the CRIB domain. A linker region spans residues 88-248 (FDAVTGEFTG…IVSIGDPKKK (161 aa)). An N6-acetyllysine modification is found at Lys-128. A Phosphothreonine modification is found at Thr-134. Tyr-139 is subject to Phosphotyrosine. Ser-141 bears the Phosphoserine mark. The tract at residues 142–190 (FTPPEKDGFPSGTPALNTKGSETSAVVTEEDDDDEDAAPPVIAPRPDHT) is disordered. Position 143 is a phosphothreonine (Thr-143). Ser-152 is modified (phosphoserine). 3 positions are modified to phosphothreonine: Thr-154, Thr-159, and Thr-169. Residues 155 to 167 (PALNTKGSETSAV) are compositionally biased toward polar residues. The segment covering 169-178 (TEEDDDDEDA) has biased composition (acidic residues). Ser-197 is modified (phosphoserine). Residues 204–228 (APVGDSNVDSGAKSSDKQKKKAKMT) form a disordered region. The Nuclear localization signal motif lies at 245 to 251 (PKKKYTR). In terms of domain architecture, Protein kinase spans 249–500 (YTRYEKIGQG…AKELLQHPFL (252 aa)). ATP-binding positions include 255–263 (IGQGASGTV) and Lys-278. Asp-368 (proton acceptor) is an active-site residue. Phosphothreonine; by autocatalysis is present on Thr-402.

It belongs to the protein kinase superfamily. STE Ser/Thr protein kinase family. STE20 subfamily. As to quaternary structure, interacts tightly with GTP-bound but not GDP-bound CDC42/p21 and RAC1. Interacts with SH3MD4. Interacts with SCRIB. Interacts with ARHGEF7 and GIT1. PAK-2p34 interacts with ARHGAP10. Interacts with RAC1. Full-length PAK2 is autophosphorylated when activated by CDC42/p21. Following cleavage, both peptides, PAK-2p27 and PAK-2p34, become highly autophosphorylated. Autophosphorylation of PAK-2p27 can occur in the absence of any effectors and is dependent on phosphorylation of Thr-402, because PAK-2p27 is acting as an exogenous substrate. In terms of processing, during apoptosis proteolytically cleaved by caspase-3 or caspase-3-like proteases to yield active PAK-2p34. Post-translationally, ubiquitinated, leading to its proteasomal degradation.

Its subcellular location is the cytoplasm. It is found in the nucleus. The protein resides in the perinuclear region. It localises to the membrane. The catalysed reaction is L-seryl-[protein] + ATP = O-phospho-L-seryl-[protein] + ADP + H(+). It catalyses the reaction L-threonyl-[protein] + ATP = O-phospho-L-threonyl-[protein] + ADP + H(+). Its activity is regulated as follows. Activated by binding small G proteins. Binding of GTP-bound CDC42 or RAC1 to the autoregulatory region releases monomers from the autoinhibited dimer, enables phosphorylation of Thr-402 and allows the kinase domain to adopt an active structure. Following caspase cleavage, autophosphorylated PAK-2p34 is constitutively active. Functionally, serine/threonine protein kinase that plays a role in a variety of different signaling pathways including cytoskeleton regulation, cell motility, cell cycle progression, apoptosis or proliferation. Acts as a downstream effector of the small GTPases CDC42 and RAC1. Activation by the binding of active CDC42 and RAC1 results in a conformational change and a subsequent autophosphorylation on several serine and/or threonine residues. Full-length PAK2 stimulates cell survival and cell growth. Phosphorylates MAPK4 and MAPK6 and activates the downstream target MAPKAPK5, a regulator of F-actin polymerization and cell migration. Phosphorylates JUN and plays an important role in EGF-induced cell proliferation. Phosphorylates many other substrates including histone H4 to promote assembly of H3.3 and H4 into nucleosomes, BAD, ribosomal protein S6, or MBP. Phosphorylates CASP7, thereby preventing its activity. Additionally, associates with ARHGEF7 and GIT1 to perform kinase-independent functions such as spindle orientation control during mitosis. On the other hand, apoptotic stimuli such as DNA damage lead to caspase-mediated cleavage of PAK2, generating PAK-2p34, an active p34 fragment that translocates to the nucleus and promotes cellular apoptosis involving the JNK signaling pathway. Caspase-activated PAK2 phosphorylates MKNK1 and reduces cellular translation. This chain is Serine/threonine-protein kinase PAK 2 (Pak2), found in Rattus norvegicus (Rat).